The following is a 93-amino-acid chain: Ferredoxin-2 (93 aa).

The region spanning 2–91 (YKVTLKTPDG…DVVIETHKED (90 aa)) is the 2Fe-2S ferredoxin-type domain. 4 residues coordinate [2Fe-2S] cluster: cysteine 37, cysteine 42, cysteine 45, and cysteine 75.

It belongs to the 2Fe2S plant-type ferredoxin family. [2Fe-2S] cluster is required as a cofactor.

The protein resides in the plastid. Its subcellular location is the chloroplast. In terms of biological role, ferredoxins are iron-sulfur proteins that transfer electrons in a wide variety of metabolic reactions. This Equisetum arvense (Field horsetail) protein is Ferredoxin-2.